The primary structure comprises 1211 residues: RNA helicase Mov10l1 (1211 aa).

2 disordered regions span residues K340–G385 and W674–D710. 2 stretches are compositionally biased toward polar residues: residues D345 to G372 and W674 to S688. Positions T694–D710 are enriched in basic and acidic residues. G770 to T777 contributes to the ATP binding site. The DEAG box signature appears at D886–G889. Residues D1192 to S1211 form a disordered region.

Belongs to the DNA2/NAM7 helicase family. SDE3 subfamily. Interacts with PIWIL1. Interacts with PIWIL2. Interacts with PIWIL4. Interacts with HSPA2. Interacts with PLD6. In terms of tissue distribution, specifically expressed in testis.

The protein localises to the cytoplasm. The enzyme catalyses ATP + H2O = ADP + phosphate + H(+). Functionally, ATP-dependent RNA helicase required during spermatogenesis to repress transposable elements and prevent their mobilization, which is essential for germline integrity. Acts via the piRNA metabolic process, which mediates the repression of transposable elements during meiosis by forming complexes composed of piRNAs and Piwi proteins and governs the methylation and subsequent repression of transposons. Involved in the primary piRNA metabolic process. Specifically binds to piRNA precursors and promotes the generation of intermediate piRNA processing fragments that are subsequently loaded to Piwi proteins. Acts via its ATP-dependent RNA helicase activity: displays 5'-3' RNA unwinding activity and probably mediates unwinding and funneling of single-stranded piRNA precursor transcripts to the endonuclease that catalyzes the first cleavage step of piRNA processing to generate piRNA intermediate fragments that are subsequently loaded to Piwi proteins. The sequence is that of RNA helicase Mov10l1 from Homo sapiens (Human).